Reading from the N-terminus, the 402-residue chain is Bone morphogenetic protein 8A (402 aa).

The first 19 residues, 1–19 (MAARPGPLWLLGLTLCALG), serve as a signal peptide directing secretion. The propeptide occupies 20 to 263 (GGGPGLRPPP…ASPSPIRTPR (244 aa)). 2 N-linked (GlcNAc...) asparagine glycosylation sites follow: Asn-158 and Asn-343. 3 disulfides stabilise this stretch: Cys-301/Cys-367, Cys-330/Cys-399, and Cys-334/Cys-401.

Belongs to the TGF-beta family. In terms of assembly, homodimer; disulfide-linked.

Its subcellular location is the secreted. Functionally, induces cartilage and bone formation. May be the osteoinductive factor responsible for the phenomenon of epithelial osteogenesis. Plays a role in calcium regulation and bone homeostasis. Signaling protein involved in regulation of thermogenesis and energy balance. Proposed to increase the peripheral response of brown adipose tissue (BAT) to adrenergic stimulation while acting centrally in the hypothalamus to increase sympathetic output to BAT. Its function is as follows. Growth factor of the TGF-beta superfamily that plays important role in various biological processes, including spermatogenesis, osteogenesis, steroidogenesis as well as regulation of energy balance. Initiates the canonical BMP signaling cascade by associating with type I receptor BMPR1A and type II receptor BMPR2. Once all three components are bound together in a complex at the cell surface, BMPR2 phosphorylates and activates BMPR1A. In turn, BMPR1A propagates signal by phosphorylating SMAD1/5/8 that travel to the nucleus and act as activators and repressors of transcription of target genes. In addition, activates the SMAD2/3 pathway. In Homo sapiens (Human), this protein is Bone morphogenetic protein 8A (BMP8A).